A 550-amino-acid polypeptide reads, in one-letter code: Carboxylesterase 4A (550 aa).

The signal sequence occupies residues 1–20 (MNWILCLSLTLLLVVQTAWG). Cysteines 88 and 116 form a disulfide. Residue serine 221 is the Acyl-ester intermediate of the active site. Residues cysteine 273 and cysteine 284 are joined by a disulfide bond. The N-linked (GlcNAc...) asparagine glycan is linked to asparagine 276. The active-site Charge relay system is the glutamate 353. Residue asparagine 386 is glycosylated (N-linked (GlcNAc...) asparagine). Histidine 465 serves as the catalytic Charge relay system.

The protein belongs to the type-B carboxylesterase/lipase family.

Its subcellular location is the secreted. Its function is as follows. Probable carboxylesterase. This chain is Carboxylesterase 4A (CES4A), found in Bos taurus (Bovine).